The following is a 299-amino-acid chain: Ribosome-inactivating protein saporin-6 (299 aa).

Positions 1–24 are cleaved as a signal peptide; it reads MKIYVVATIAWILLQFSAWTTTDA. Residue Glu-200 is part of the active site. A propeptide spanning residues 278–299 is cleaved from the precursor; that stretch reads SSNEANSTVRHYGPLKPTLLIT. Residue Asn-283 is glycosylated (N-linked (GlcNAc...) asparagine).

This sequence belongs to the ribosome-inactivating protein family. Type 1 RIP subfamily. Seeds and leaves of the plant.

It catalyses the reaction Endohydrolysis of the N-glycosidic bond at one specific adenosine on the 28S rRNA.. Functionally, ribosome-inactivating protein of type 1, inhibits protein synthesis in animal cells. Useful as immunotoxin for pharmacological applications. This chain is Ribosome-inactivating protein saporin-6 (SAP6), found in Saponaria officinalis (Common soapwort).